Consider the following 220-residue polypeptide: Cytidylate kinase (220 aa).

9-17 (GPAASGKST) lines the ATP pocket.

It belongs to the cytidylate kinase family. Type 1 subfamily.

The protein localises to the cytoplasm. The enzyme catalyses CMP + ATP = CDP + ADP. The catalysed reaction is dCMP + ATP = dCDP + ADP. The polypeptide is Cytidylate kinase (Thermotoga sp. (strain RQ2)).